A 105-amino-acid chain; its full sequence is Neuropeptide-like protein 32 (105 aa).

The first 22 residues, 1 to 22, serve as a signal peptide directing secretion; sequence MRQFNLLLVFCLIALTALPVFS. The propeptide occupies 23–54; it reads FPNGLTMDSIDMEPMGAFDENGAADESPRVKR. Glycine 59 carries the glycine amide modification. Position 64 is a tryptophan amide (tryptophan 64). Residues glycine 68, glycine 73, and glycine 80 each carry the glycine amide modification. Tryptophan 86 is modified (tryptophan amide). 2 positions are modified to glycine amide: glycine 91 and glycine 98. A Tryptophan amide modification is found at tryptophan 103.

The protein belongs to the YARP (YGGW-amide related peptide) family.

It localises to the secreted. Functionally, may have antimicrobial activity. This chain is Neuropeptide-like protein 32 (nlp-32), found in Caenorhabditis elegans.